A 157-amino-acid polypeptide reads, in one-letter code: Ribosomal RNA large subunit methyltransferase H (157 aa).

Residues Leu75, Gly106, and 125 to 130 each bind S-adenosyl-L-methionine; that span reads FSELTF.

This sequence belongs to the RNA methyltransferase RlmH family. In terms of assembly, homodimer.

The protein resides in the cytoplasm. The enzyme catalyses pseudouridine(1915) in 23S rRNA + S-adenosyl-L-methionine = N(3)-methylpseudouridine(1915) in 23S rRNA + S-adenosyl-L-homocysteine + H(+). Specifically methylates the pseudouridine at position 1915 (m3Psi1915) in 23S rRNA. This is Ribosomal RNA large subunit methyltransferase H from Malacoplasma penetrans (strain HF-2) (Mycoplasma penetrans).